We begin with the raw amino-acid sequence, 295 residues long: Glutamyl-Q tRNA(Asp) synthetase (295 aa).

L-glutamate is bound by residues 6–10 (RFAPS) and E42. The 'HIGH' region signature appears at 9–19 (PSPTGAMHLGN). C93, C95, Y118, and C122 together coordinate Zn(2+). The L-glutamate site is built by Y177 and R195. Positions 233–237 (RLAKR) match the 'KMSKS' region motif. K236 contacts ATP.

The protein belongs to the class-I aminoacyl-tRNA synthetase family. GluQ subfamily. Zn(2+) is required as a cofactor.

Its function is as follows. Catalyzes the tRNA-independent activation of glutamate in presence of ATP and the subsequent transfer of glutamate onto a tRNA(Asp). Glutamate is transferred on the 2-amino-5-(4,5-dihydroxy-2-cyclopenten-1-yl) moiety of the queuosine in the wobble position of the QUC anticodon. The chain is Glutamyl-Q tRNA(Asp) synthetase from Deinococcus radiodurans (strain ATCC 13939 / DSM 20539 / JCM 16871 / CCUG 27074 / LMG 4051 / NBRC 15346 / NCIMB 9279 / VKM B-1422 / R1).